We begin with the raw amino-acid sequence, 1961 residues long: Ankyrin-3 (1961 aa).

Residues 1 to 10 (MSEEPKEKPA) are compositionally biased toward basic and acidic residues. The segment at 1–25 (MSEEPKEKPAKPAHRKRKGKKSDAN) is disordered. Over residues 11–20 (KPAHRKRKGK) the composition is skewed to basic residues. Ser-22 bears the Phosphoserine mark. ANK repeat units follow at residues 56-85 (NGLN…NVDA), 89-118 (KGNT…NVNA), 122-151 (NGFT…SQSL), 155-184 (DGFT…KGKV), 186-213 (LPAL…NADV), 217-246 (SGFT…AVDF), 250-279 (NDIT…KIDA), 283-312 (DGLT…PILS), 316-345 (NGLS…PVDD), 349-378 (DYLT…SPNA), 382-411 (NGFT…SIQA), 415-444 (SGLT…SPNT), 448-477 (RGET…QVEA), 481-510 (DDQT…SPNA), 514-543 (SGYT…SLSI), 547-576 (KGFT…SPDA), 580-609 (SGLT…SPHA), 613-642 (NGYT…DANA), 646-675 (QGIA…NVNL), 679-708 (SGLT…HVDA), 712-741 (MGYT…KVNA), 745-774 (NGYT…SPNE), and 778-807 (NGNT…EIMT). Ser-606 carries the post-translational modification Phosphoserine. Leu-732 carries the phosphoserine modification. A phosphoserine mark is found at Ser-830, Ser-844, Ser-850, Ser-873, Ser-914, Ser-917, Ser-923, Ser-958, Ser-960, and Ser-1114. ZU5 domains lie at 985–1140 (FLVS…VVSR) and 1142–1289 (KQES…LADC). Positions 1274–1408 (VSFTTNVSAR…SIKIRDTSQE (135 aa)) are UPA domain. Residues Ser-1451, Ser-1462, Ser-1470, Ser-1473, and Gly-1560 each carry the phosphoserine modification. In terms of domain architecture, Death spans 1478 to 1562 (TDIRMAIVAD…DIVTLLEGPI (85 aa)). 5 disordered regions span residues 1606 to 1678 (PNPF…DPLD), 1698 to 1740 (SVPG…VTED), 1784 to 1818 (WQNE…DQAR), 1844 to 1884 (PEAK…PVSP), and 1915 to 1961 (MTRT…KKTH). Basic and acidic residues predominate over residues 1725-1740 (QQEKGKSGPDEEVTED). Positions 1784 to 1795 (WQNETPSGSLES) are enriched in polar residues. Residues Ser-1795, Ser-1813, and Ser-1883 each carry the phosphoserine modification. Basic and acidic residues predominate over residues 1808–1818 (DRLDDSSDQAR). The span at 1933–1961 (GSTRSEPKQGEGYKVKTKKEIRNVEKKTH) shows a compositional bias: basic and acidic residues.

May be a constituent of a NFASC/NRCAM/ankyrin G complex. Interacts with RHBG. Directly interacts with DMD and betaDAG1; this interaction does not interfere with DMD-binding and is required for DMD and betaDAG1 retention at costameres. Interacts (via N-terminal ANK repeats) with SCHIP1 isoform 7 (via C-terminus); this interaction is required for the localization at axon initial segments (AISs) and nodes of Ranvier (NRs). Interacts with PLEC and FLNC. Interacts with KCNA1; this inhibits channel activity. Interacts with SCN5A. Interacts with PKP2 and GJA1/CX43. In terms of tissue distribution, expressed in many epithelial tissues, muscles and axons. Expressed in kidney, brain, skin, lung, liver, intestine, pancreas, heart and testis (at protein level). In testis, expressed in Leydig cells, but very weakly or not at all in Sertoli cells or seminiferous tubules. Expressed in macrophages (at protein level).

The protein resides in the cytoplasm. The protein localises to the cytoskeleton. It localises to the cell projection. Its subcellular location is the axon. It is found in the cell membrane. The protein resides in the sarcolemma. The protein localises to the postsynaptic cell membrane. It localises to the lysosome. Its subcellular location is the T-tubule. In terms of biological role, membrane-cytoskeleton linker. May participate in the maintenance/targeting of ion channels and cell adhesion molecules at the nodes of Ranvier and axonal initial segments. In skeletal muscle, required for costamere localization of DMD and betaDAG1. Regulates KCNA1 channel activity in function of dietary Mg(2+) levels, and thereby contributes to the regulation of renal Mg(2+) reabsorption. Required for intracellular adhesion and junctional conductance in myocytes, potentially via stabilization of GJA1/CX43 protein abundance and promotion of PKP2, GJA1/CX43, and SCN5A/Nav1.5 localization to cell-cell junctions. The chain is Ankyrin-3 (Ank3) from Mus musculus (Mouse).